The chain runs to 2281 residues: MGFARQIKLLLWKNWTLRKRQKIRFVVELVWPLSLFLVLIWLRNVNPLYSKHECHFPNKAMPSAGMLPWLQGIFCNVNNPCFQSPTAGESPGIVSNYNNSILARVYRDFQELLMDAPESQHLGQVWRELRTLSQLMNTLRMHPERIAGRGIRIREVLKDDEMLTLFLVKNIGLSDSVVYLLVNSQVRPEQFARGVPDLMLKDIACSEALLERFLIFPQRRAAQTVRGSLCSLSQGTLQWMEDTLYANVDFFKLFHVFPRLLDSRSQGMNLRSWGRILSDMSPRIQEFIHRPSVQDLLWVTRPLVQTGGPETFTQLMGILSDLLCGYPEGGGSRVFSFNWYEDNNYKAFLGIDSTRKDPIYSYDERTTTFCNALIQSLESNPLTKIAWRAAKPLLMGKILFTPDSPATRRILKNANSTFEELERVRKLVKVWEEVGPQIWYFFDKSTQMSMIRDTLENPTVKAFWNRQLGEEGITAEAVLNFLYNGPREGQADDVDNFNWRDIFNITDRALRLANQYLECLILDKFESYDDEFQLTQRALSLLEENRFWAGVVFPDMHPWTSSLPPHVKYKIRMDIDVVEKTNKIKDRYWDSGPRADPVEDFRYIWGGFAYLQDMVEHGITRSQAQEEVPVGIYLQQMPYPCFVDDSFMIILNRCFPIFMVLAWIYSVSMTVKSIVLEKELRLKETLKNQGVSNRVIWCTWFLDSFSIMSMSICLLTIFIMHGRILHYSNPFILFLFLLAFSIATIMQCFLLSTFFSRASLAAACSGVIYFTLYLPHILCFAWQDRITADMKMAVSLLSPVAFGFGTEYLARFEEQGVGLQWSNIGNSPMEGDEFSFLMSMKMMLLDAALYGLLAWYLDQVFPGDYGTPLPWYFLLQESYWLGGEGCSTREERALEKTEPITEEMEDPEYPEGINDCFFERELPGLVPGVCVKNLVKIFEPYGRPAVDRLNITFYESQITAFLGHNGAGKTTTLSIMTGLLPPTSGTVLVGGKDIETNLDAIRQSLGMCPQHNILFHHLTVAEHILFYAQLKGRSWDKAQLEMEAMLEDTGLHHKRNEEAQDLSGGVQRKLSVAIAFVGDAKVVVLDEPTSGVDPYSRRSIWDLLLKYRSGRTIIMSTHHMDEADILGDRIAIISQGRLYCSGTPLFLKNCFGTGFYLTLVRRMKTIQSQGRGREATCSCASKGFSVRCPACAEAITPEQVLDGDVNELTDMVHHHVPEAKLVECIGQELIFLLPNKNFKQRAYASLFRELEETLADLGLSSFGISDTPLEEIFLKVTEDLDSGHLFAGGTQQKRENINLRHPCSGPSEKAGQTPQGSSSHPREPAAHPEGQPPPEREGHSRLNSGARLIVQHVQALLVKRFQHTIRSHKDFLAQIVLPATFVFLALMLSLIIPPFGEYPALTLHPWMYGQQYTFFSMDQLDSEWLSALADVLVNKPGFGNRCLKEEWLPEFPCGNSSPWKTPSVSPDVTHLLQQQKWTADQPSPSCRCSTREKLTMLPECPEGAGGLPPPQRIQRSTEILQDLTDRNVSDFLVKTYPALIRSSLKSKFWVNEQRYGGISVGGKLPAPPFTGEALVGFLSDLGQLMNVSGGPMTREAAKEMPAFLKQLETEDNIKVWFNNKGWHALVSFLNVAHNAILRASLHKDKNPEEYGITVISQPLNLTKEQLSEITVLTTSVDAVVAICVIFAMSFVPASFVLYLIQERVNKAKHLQFVSGVSPTTYWLTNFLWDIMNYTVSAALVVGIFIGFQKKAYTSSENLPALVALLMLYGWAVIPMMYPASFLFDIPSTAYVALSCANLFIGINSSAITFVLELFENNRTLLRINAMLRKLLIIFPHFCLGRGLIDLALSQAVTDVYARFGEEHSSNPFQWDLIGKNLAAMAVEGVVYFLLTLLIQYQFFFSRWTTEPAKEPITDEDDDVAEERQRIISGGNKTDILRLNELTKVYSGTSSPAVDRLCVGVRPGECFGLLGVNGAGKTTTFKMLTGDTAVTSGDATVAGKSILTNISDVHQSMGYCPQFDAIDDLLTGREHLYLYARLRGVPAEEIERVTNWSIQSLGLSLYADRLAGTYSGGNKRKLSTAIALIGCPPLVLLDEPTTGMDPQARRMLWNTIMGIIREGRAVVLTSHSMEECEALCTRLAIMVKGAFQCLGTIQHLKSKFGDGYIVTMKIRSPKDDLLPDLGPVEQFFQGNFPGSVQRERHYNMLQFQVSSSSLARIFRLLVSHKDSLLIEEYSVTQTTLDQVFVNFAKQQNETYDLPLHPRAAGASRQAKEVDKGNSAPQG.

Residues 1–24 (MGFARQIKLLLWKNWTLRKRQKIR) lie on the Cytoplasmic side of the membrane. A helical membrane pass occupies residues 25–45 (FVVELVWPLSLFLVLIWLRNV). The Extracellular segment spans residues 46-646 (NPLYSKHECH…MPYPCFVDDS (601 aa)). 2 cysteine pairs are disulfide-bonded: cysteine 54–cysteine 81 and cysteine 75–cysteine 324. An N-linked (GlcNAc...) asparagine glycan is attached at asparagine 98. The Mg(2+) site is built by serine 336 and asparagine 338. Cysteines 370 and 519 form a disulfide. N-linked (Hex...) asparagine glycans are attached at residues asparagine 415 and asparagine 504. Residues arginine 587 and arginine 653 each contribute to the an N-all-trans-retinylidenephosphatidylethanolamine site. 3 disulfide bridges follow: cysteine 641–cysteine 1488, cysteine 1442–cysteine 1453, and cysteine 1486–cysteine 1500. Residues 647 to 667 (FMIILNRCFPIFMVLAWIYSV) traverse the membrane as a helical segment. Over 668 to 699 (SMTVKSIVLEKELRLKETLKNQGVSNRVIWCT) the chain is Cytoplasmic. Residues 700–720 (WFLDSFSIMSMSICLLTIFIM) traverse the membrane as a helical segment. The Extracellular segment spans residues 721-730 (HGRILHYSNP). The chain crosses the membrane as a helical span at residues 731-751 (FILFLFLLAFSIATIMQCFLL). The Cytoplasmic segment spans residues 752 to 759 (STFFSRAS). The chain crosses the membrane as a helical span at residues 760-780 (LAAACSGVIYFTLYLPHILCF). The Extracellular portion of the chain corresponds to 781–835 (AWQDRITADMKMAVSLLSPVAFGFGTEYLARFEEQGVGLQWSNIGNSPMEGDEFS). A helical membrane pass occupies residues 836-856 (FLMSMKMMLLDAALYGLLAWY). Residues 857–1374 (LDQVFPGDYG…IRSHKDFLAQ (518 aa)) lie on the Cytoplasmic side of the membrane. Threonine 901 is modified (phosphothreonine). In terms of domain architecture, ABC transporter 1 spans 929-1160 (VCVKNLVKIF…FGTGFYLTLV (232 aa)). 3 residues coordinate ATP: phenylalanine 938, glycine 966, and lysine 969. Residue threonine 970 coordinates Mg(2+). 6 residues coordinate ATP: threonine 971, glutamine 1010, lysine 1054, glycine 1064, glycine 1065, and histidine 1118. At serine 1185 the chain carries Phosphoserine. Residues 1295–1340 (ENINLRHPCSGPSEKAGQTPQGSSSHPREPAAHPEGQPPPEREGHS) form a disordered region. A compositionally biased stretch (polar residues) spans 1310–1319 (AGQTPQGSSS). Threonine 1313 bears the Phosphothreonine mark. A phosphoserine mark is found at serine 1317 and serine 1319. Residues 1375–1395 (IVLPATFVFLALMLSLIIPPF) form a helical membrane-spanning segment. Residues 1396-1679 (GEYPALTLHP…TVLTTSVDAV (284 aa)) are Extracellular-facing. Asparagine 1455 carries N-linked (Hex...) asparagine glycosylation. Asparagine 1527 carries N-linked (Hex...) asparagine glycosylation. Asparagine 1586 is a glycosylation site (N-linked (GlcNAc...) asparagine). N-linked (Hex...) asparagine glycosylation is present at asparagine 1660. Residues 1680–1700 (VAICVIFAMSFVPASFVLYLI) form a helical membrane-spanning segment. At 1701 to 1725 (QERVNKAKHLQFVSGVSPTTYWLTN) the chain is on the cytoplasmic side. The helical transmembrane segment at 1726–1746 (FLWDIMNYTVSAALVVGIFIG) threads the bilayer. The Extracellular portion of the chain corresponds to 1747–1757 (FQKKAYTSSEN). A helical membrane pass occupies residues 1758-1778 (LPALVALLMLYGWAVIPMMYP). Topologically, residues 1779 to 1790 (ASFLFDIPSTAY) are cytoplasmic. The helical transmembrane segment at 1791-1811 (VALSCANLFIGINSSAITFVL) threads the bilayer. The Extracellular portion of the chain corresponds to 1812-1829 (ELFENNRTLLRINAMLRK). N-linked (GlcNAc...) asparagine glycosylation occurs at asparagine 1817. The chain crosses the membrane as a helical span at residues 1830–1850 (LLIIFPHFCLGRGLIDLALSQ). The Cytoplasmic portion of the chain corresponds to 1851–1879 (AVTDVYARFGEEHSSNPFQWDLIGKNLAA). Residues 1880–1900 (MAVEGVVYFLLTLLIQYQFFF) form a helical membrane-spanning segment. The Extracellular portion of the chain corresponds to 1901–2281 (SRWTTEPAKE…VDKGNSAPQG (381 aa)). A glycan (N-linked (GlcNAc...) asparagine) is linked at asparagine 1931. Residues 1936–2168 (LRLNELTKVY…FGDGYIVTMK (233 aa)) form the ABC transporter 2 domain. Asparagine 1972, glycine 1973, lysine 1976, threonine 1977, and threonine 1978 together coordinate ATP. Threonine 1977 is a Mg(2+) binding site. Asparagine 2004 and asparagine 2050 each carry an N-linked (GlcNAc...) asparagine glycan. Glycine 2071 lines the ATP pocket. Positions 2242–2247 (VFVNFA) are essential for ATP binding and ATPase activity. An N-linked (GlcNAc...) asparagine glycan is attached at asparagine 2251. The disordered stretch occupies residues 2262 to 2281 (AAGASRQAKEVDKGNSAPQG).

Post-translationally, N-glycosylated. Proteolytic cleavage by trypsin leads to a 120-kDa N-terminal fragment and a 115-kDa C-terminal fragment that are linked through disulfide bonds. In terms of processing, phosphorylation is independent of light exposure and modulates ATPase activity. As to expression, expressed in retina namely in the periphery and incisures of the rod outer segments (ROS).

It localises to the membrane. The protein resides in the cell projection. The protein localises to the cilium. Its subcellular location is the photoreceptor outer segment. It is found in the cytoplasmic vesicle. It localises to the endoplasmic reticulum. It catalyses the reaction ATP + H2O + phospholipidSide 1 = ADP + phosphate + phospholipidSide 2.. It carries out the reaction an N-all-trans-retinylidenephosphatidylethanolamine(out) + ATP + H2O = an N-all-trans-retinylidenephosphatidylethanolamine(in) + ADP + phosphate + H(+). The enzyme catalyses a 1,2-diacyl-sn-glycero-3-phosphoethanolamine(out) + ATP + H2O = a 1,2-diacyl-sn-glycero-3-phosphoethanolamine(in) + ADP + phosphate + H(+). The catalysed reaction is N-11-cis-retinylidenephosphatidylethanolamine(out) + ATP + H2O = N-11-cis-retinylidenephosphatidylethanolamine(in) + ADP + phosphate + H(+). It catalyses the reaction ATP + H2O = ADP + phosphate + H(+). Its activity is regulated as follows. All-trans-retinal transport activity is reduced by EDTA chelation of Mg2+. All-trans-retinal transport activity is inhibited by N-ethylmaleimide (NEM). Phosphatidylethanolamine transport is strongly inhibited by beryllium fluoride and NEM. Flippase that catalyzes in an ATP-dependent manner the transport of retinal-phosphatidylethanolamine conjugates like the 11-cis and all-trans isomers of N-retinylidene-phosphatidylethanolamine from the lumen to the cytoplasmic leaflet of photoreceptor outer segment disk membranes, where N-cis-retinylidene-phosphatidylethanolamine (N-cis-R-PE) is then isomerized to its all-trans isomer (N-trans-R-PE) and reduced by RDH8 to produce all-trans-retinol (all-trans-rol) and therefore prevents the accumulation of excess of 11-cis-retinal and its schiff-base conjugate and the formation of toxic bisretinoid. Displays both ATPase and GTPase activity that is strongly influenced by the lipid environment and the presence of retinoid compounds. Binds the unprotonated form of N-retinylidene-phosphatidylethanolamine with high affinity in the absence of ATP and ATP binding and hydrolysis induce a protein conformational change that causes the dissociation of N-retinylidene-phosphatidylethanolamine. This chain is Retinal-specific phospholipid-transporting ATPase ABCA4, found in Bos taurus (Bovine).